An 86-amino-acid chain; its full sequence is Maxadilan (86 aa).

A signal peptide spans 1–23 (MKQILLISLVVVLAVFAFNVAEG). Cystine bridges form between Cys24-Cys28 and Cys37-Cys74.

In terms of assembly, interacts with human ADCYAP1R1. In terms of tissue distribution, salivary gland (at protein level).

The protein localises to the secreted. In terms of biological role, potent vasodilator. Activates mammalian ADCYAP1R1, a PAC1 receptor, and induces cAMP accumulation in host cells. Causes the development of erythema following superficial injection into the rabbit or human skin. Influences adaptive immune responses mediated by host dendritic cells. Reduces surface expression of CD80 on host dendritic cells stimulated with lipopolysaccharides (LPS) and induces concomitant increase in CD86 expression on a subpopulation of these cells. Redirects cytokine secretion by LPS-activated host dendritic cells toward type 2 responses: decreases secretion of TNF-alpha/TNF, IL-12p40/IL12B and IFN-gamma/IFNG, and increases secretion of IL6 and IL10. Reduces ability of host bone marrow-derived dendritic cells to stimulate proliferation of CD4(+) T-cells. Reprograms the effect of LPS-activated host dendritic cells on cytokine secretion profiles in host T-cells: decreases secretion of TNF-alpha/TNF and IFN-gamma/IFNG, increases secretion of IL6 and IL13, and increases secretion of pro-inflammatory cytokine IL-1beta/IL1B in mixed lymphocyte reaction (MLR) cultures. Reduces LPS-induced up-regulation of CCR7 in activated host dendritic cells. Inhibits IFN-gamma/IFNG and IL-12p40/IL12B production by human peripheral blood mononuclear cells. Increases IL6 and decreases TNF-alpha/TNF production by LPS-stimulated human monocytes. Functionally, (Microbial infection) Probably plays a critical role in the enhancement of Leishmania infectivity in the host attributed to sand fly saliva. This Lutzomyia longipalpis (Sand fly) protein is Maxadilan.